The primary structure comprises 158 residues: MSDTMQSLDQLSALKTAAPDAPKREKKVDKQGRAYATGKRKDAVARVWIKPGSGKIVVNTRDVEVYFARPVLRMLIQQPIVAAARQGQYDVVATVAGGGLSGQAGAVRHGISKALTHFEPDLRGVLKKGGFLTRDSRVVERKKYGKAKARRSFQFSKR.

The segment covering M1–Q10 has biased composition (polar residues). Residues M1–Y35 are disordered. A compositionally biased stretch (basic and acidic residues) spans A21–G32.

It belongs to the universal ribosomal protein uS9 family.

The sequence is that of Small ribosomal subunit protein uS9 from Afipia carboxidovorans (strain ATCC 49405 / DSM 1227 / KCTC 32145 / OM5) (Oligotropha carboxidovorans).